We begin with the raw amino-acid sequence, 80 residues long: Conotoxin SIVB (80 aa).

Positions 1–21 (MGMRMMFTVFLSVVLATTVVS) are cleaved as a signal peptide. Positions 22 to 38 (TPSDRASDGRNAAVHER) are excised as a propeptide. Position 39 is a pyrrolidone carboxylic acid (Q39). S45 is a glycosylation site (O-linked (HexNAc...) serine). P55, P60, P61, P69, P72, and P75 each carry 4-hydroxyproline. P75 is subject to Proline amide. The propeptide occupies 76 to 80 (GRRND).

Belongs to the conotoxin A superfamily. Contains 3 disulfide bonds. Post-translationally, O-linked glycan consists of Hex3-HexNAc2 pentasaccharide. Expressed by the venom duct.

The protein resides in the secreted. Functionally, neurotoxin with probable activity on sodium channel. Induces intense repetitive firing of the frog neuromuscular junction, leading to a tetanic contracture in muscle fiber (spastic paralysis). In vivo, shows the same effect as the whole venom when injected on fish prey. This is Conotoxin SIVB from Conus striatus (Striated cone).